The primary structure comprises 383 residues: Succinyl-diaminopimelate desuccinylase (383 aa).

His73 contacts Zn(2+). Asp75 is a catalytic residue. Residue Asp107 coordinates Zn(2+). Glu141 acts as the Proton acceptor in catalysis. Zn(2+)-binding residues include Glu142, Glu170, and His356.

Belongs to the peptidase M20A family. DapE subfamily. As to quaternary structure, homodimer. Requires Zn(2+) as cofactor. Co(2+) is required as a cofactor.

It carries out the reaction N-succinyl-(2S,6S)-2,6-diaminopimelate + H2O = (2S,6S)-2,6-diaminopimelate + succinate. Its pathway is amino-acid biosynthesis; L-lysine biosynthesis via DAP pathway; LL-2,6-diaminopimelate from (S)-tetrahydrodipicolinate (succinylase route): step 3/3. Catalyzes the hydrolysis of N-succinyl-L,L-diaminopimelic acid (SDAP), forming succinate and LL-2,6-diaminopimelate (DAP), an intermediate involved in the bacterial biosynthesis of lysine and meso-diaminopimelic acid, an essential component of bacterial cell walls. In Pseudomonas putida (strain ATCC 700007 / DSM 6899 / JCM 31910 / BCRC 17059 / LMG 24140 / F1), this protein is Succinyl-diaminopimelate desuccinylase.